The following is a 503-amino-acid chain: NAD(P)H-quinone oxidoreductase chain 4, chloroplastic (503 aa).

14 helical membrane-spanning segments follow: residues 3–23 (FFPWLTIIVVFPIFAGSIVFF), 37–57 (LCICILELLITTYTFCFHFQV), 84–104 (GLSVGPILLTGFITTLATLAA), 113–130 (LFHFLMLAMYSGQIGLFA), 134–154 (LFLFFIMWELELIPVYLLLSM), 167–187 (FILYTAGGSIFLLMGVLGLTL), 208–228 (ALEIIFYIGFFIAFAVKSPIL), 242–262 (HYSTCMLLAGILLKMGAYGLI), 274–294 (SLFSPYLVIVGTIQMIYAALT), 305–325 (IAYSSVSHMGFIIIGIGSMTD), 330–350 (GALLQIISHGFIGAALFFLAG), 385–405 (SLALPGMSGFVAELLVFFGII), 416–436 (ILISFVMAIGIILTPIYSLSM), and 462–482 (LFLSISILLPVIGIGMYPDFV).

It belongs to the complex I subunit 4 family.

The protein resides in the plastid. It is found in the chloroplast thylakoid membrane. The enzyme catalyses a plastoquinone + NADH + (n+1) H(+)(in) = a plastoquinol + NAD(+) + n H(+)(out). The catalysed reaction is a plastoquinone + NADPH + (n+1) H(+)(in) = a plastoquinol + NADP(+) + n H(+)(out). The sequence is that of NAD(P)H-quinone oxidoreductase chain 4, chloroplastic from Ipomoea purpurea (Common morning glory).